Reading from the N-terminus, the 344-residue chain is Tryptophan--tRNA ligase (344 aa).

ATP is bound by residues 20–22 (QPS) and 28–29 (GN). A 'HIGH' region motif is present at residues 21–29 (PSGALHLGN). Asp-144 provides a ligand contact to L-tryptophan. Residues 156–158 (GED), Val-197, and 206–210 (KMSKS) contribute to the ATP site. A 'KMSKS' region motif is present at residues 206–210 (KMSKS).

Belongs to the class-I aminoacyl-tRNA synthetase family. As to quaternary structure, homodimer.

The protein localises to the cytoplasm. The catalysed reaction is tRNA(Trp) + L-tryptophan + ATP = L-tryptophyl-tRNA(Trp) + AMP + diphosphate + H(+). Catalyzes the attachment of tryptophan to tRNA(Trp). The sequence is that of Tryptophan--tRNA ligase from Caulobacter vibrioides (strain ATCC 19089 / CIP 103742 / CB 15) (Caulobacter crescentus).